The chain runs to 130 residues: Small ribosomal subunit protein uS9 (130 aa).

The disordered stretch occupies residues 107–130 (DSREVERKKVGLRKARRRPQFSKR). The segment covering 116 to 130 (VGLRKARRRPQFSKR) has biased composition (basic residues).

The protein belongs to the universal ribosomal protein uS9 family.

This is Small ribosomal subunit protein uS9 from Marinomonas sp. (strain MWYL1).